We begin with the raw amino-acid sequence, 440 residues long: Xylose isomerase (440 aa).

Catalysis depends on residues histidine 100 and aspartate 103. Positions 231, 267, 270, 295, 306, 308, and 338 each coordinate Mg(2+).

It belongs to the xylose isomerase family. As to quaternary structure, homotetramer. Mg(2+) is required as a cofactor.

The protein localises to the cytoplasm. The catalysed reaction is alpha-D-xylose = alpha-D-xylulofuranose. In Paraburkholderia xenovorans (strain LB400), this protein is Xylose isomerase.